Reading from the N-terminus, the 485-residue chain is Podocalyxin (485 aa).

The N-terminal stretch at 1–24 (MRPTLALSALLLLQLLLLSTPSLS) is a signal peptide. The interval 22 to 267 (SLSQDNGNKT…STPSSTWTSG (246 aa)) is disordered. Residues 25–386 (QDNGNKTDTS…PPEVNEDRFS (362 aa)) are Extracellular-facing. Polar residues predominate over residues 26 to 57 (DNGNKTDTSDITSIDQNQDKPATNQPSNATPK). N-linked (GlcNAc...) asparagine glycans are attached at residues N29 and N82. Residues 58 to 109 (SSVQPPTPTSISTSSPDPKATQSSNSSVTTTSDSTTDRTSSSTSTVPTTSNS) are compositionally biased toward low complexity. 2 stretches are compositionally biased toward polar residues: residues 110–128 (GQTVSSGGKSSDKITTALP) and 135–149 (NASSQPTDLNTSTKL). 3 N-linked (GlcNAc...) asparagine glycosylation sites follow: N135, N144, and N156. The segment covering 150-161 (PSTPTTNSTASP) has biased composition (low complexity). Polar residues-rich tracts occupy residues 163-176 (QPVSHSEGQHTTVQ), 186-228 (DNTT…QPTG), and 235-253 (SVPTTEEFTHSTSSWTPVV). An N-linked (GlcNAc...) asparagine glycan is attached at N187. The segment covering 254 to 267 (SQGPSTPSSTWTSG) has biased composition (low complexity). N287 carries an N-linked (GlcNAc...) asparagine glycan. The chain crosses the membrane as a helical span at residues 387–407 (LPLIITIVCMASFLLLVAALY). At 408 to 485 (GCCHQRISQR…DLDEEEDTHL (78 aa)) the chain is on the cytoplasmic side. T445 carries the post-translational modification Phosphothreonine. Phosphoserine is present on S464. Position 483 is a phosphothreonine (T483).

Belongs to the podocalyxin family. As to quaternary structure, monomer; when associated with the membrane raft. Oligomer; when integrated in the apical membrane. Interacts with NHERF2. Interacts (via the C-terminal PDZ-binding motif DTHL) with NHERF1 (via the PDZ domains); the interaction take place early in the secretory pathway and is necessary for its apical membrane sorting. Found in a complex with EZR, PODXL and NHERF2. Associates with the actin cytoskeleton through complex formation with EZR and NHERF2. Interacts (via the C-terminal PDZ-binding motif DTHL) with NHERF1 (via the PDZ domains); interaction is not detected in glomerular epithelium cells. Interacts (via the C-terminal PDZ-binding motif DTHL) with NHERF2 (via the PDZ 1 domain); interaction is detected in glomerular epithelium cells. Interacts with EZR. Post-translationally, N- and O-linked glycosylated. Sialoglycoprotein. Glomerular epithelium cell (podocyte) (at protein level).

The protein resides in the apical cell membrane. Its subcellular location is the cell projection. It is found in the microvillus. The protein localises to the membrane raft. It localises to the lamellipodium. The protein resides in the filopodium. Its subcellular location is the ruffle. It is found in the membrane. Involved in the regulation of both adhesion and cell morphology and cancer progression. Functions as an anti-adhesive molecule that maintains an open filtration pathway between neighboring foot processes in the podocyte by charge repulsion. Acts as a pro-adhesive molecule, enhancing the adherence of cells to immobilized ligands, increasing the rate of migration and cell-cell contacts in an integrin-dependent manner. Induces the formation of apical actin-dependent microvilli. Involved in the formation of a preapical plasma membrane subdomain to set up initial epithelial polarization and the apical lumen formation during renal tubulogenesis. Plays a role in cancer development and aggressiveness by inducing cell migration and invasion through its interaction with the actin-binding protein EZR. Affects EZR-dependent signaling events, leading to increased activities of the MAPK and PI3K pathways in cancer cells. The polypeptide is Podocalyxin (Podxl) (Rattus norvegicus (Rat)).